The following is a 200-amino-acid chain: 3-isopropylmalate dehydratase small subunit (200 aa).

Belongs to the LeuD family. LeuD type 1 subfamily. Heterodimer of LeuC and LeuD.

It carries out the reaction (2R,3S)-3-isopropylmalate = (2S)-2-isopropylmalate. Its pathway is amino-acid biosynthesis; L-leucine biosynthesis; L-leucine from 3-methyl-2-oxobutanoate: step 2/4. Functionally, catalyzes the isomerization between 2-isopropylmalate and 3-isopropylmalate, via the formation of 2-isopropylmaleate. The sequence is that of 3-isopropylmalate dehydratase small subunit from Pseudarthrobacter chlorophenolicus (strain ATCC 700700 / DSM 12829 / CIP 107037 / JCM 12360 / KCTC 9906 / NCIMB 13794 / A6) (Arthrobacter chlorophenolicus).